A 1409-amino-acid polypeptide reads, in one-letter code: Adhesion and penetration protein autotransporter (1409 aa).

The signal sequence occupies residues 1–25 (MKKTVFRLNFLTACVSLGIASQAWA). Positions 26–294 (GHTYFGIDYQ…LIREEWFYNE (269 aa)) constitute a Peptidase S6 domain. Ser250 is a catalytic residue. Disordered regions lie at residues 866–888 (YSAS…TPTS) and 1016–1078 (AKQV…SKRA). Over residues 1057 to 1067 (VEQTTETQTSK) the composition is skewed to polar residues. Residues 1068-1077 (PKTKKGRSKR) are compositionally biased toward basic residues. One can recognise an Autotransporter domain in the interval 1156–1409 (VDQAQSALWT…NVGVKLGYRW (254 aa)).

Its subcellular location is the periplasm. It localises to the secreted. The protein resides in the cell surface. It is found in the cell outer membrane. In terms of biological role, probable protease; promotes adherence and invasion by directly binding to a host cell structure. The polypeptide is Adhesion and penetration protein autotransporter (hap) (Haemophilus influenzae (strain ATCC 51907 / DSM 11121 / KW20 / Rd)).